The chain runs to 237 residues: Uridylate kinase (237 aa).

Residue 12-15 coordinates ATP; sequence KLSG. The tract at residues 20–25 is involved in allosteric activation by GTP; sequence GDEGFG. Gly54 provides a ligand contact to UMP. Residues Gly55 and Arg59 each coordinate ATP. UMP-binding positions include Asp74 and 135-142; that span reads TGSPFFTT. Thr162, Tyr168, and Asp171 together coordinate ATP.

This sequence belongs to the UMP kinase family. As to quaternary structure, homohexamer.

The protein resides in the cytoplasm. The enzyme catalyses UMP + ATP = UDP + ADP. It participates in pyrimidine metabolism; CTP biosynthesis via de novo pathway; UDP from UMP (UMPK route): step 1/1. Allosterically activated by GTP. Inhibited by UTP. Catalyzes the reversible phosphorylation of UMP to UDP. The chain is Uridylate kinase from Haemophilus ducreyi (strain 35000HP / ATCC 700724).